Consider the following 59-residue polypeptide: UPF0434 protein VC_1876 (59 aa).

The protein belongs to the UPF0434 family.

This is UPF0434 protein VC_1876 from Vibrio cholerae serotype O1 (strain ATCC 39315 / El Tor Inaba N16961).